Here is a 139-residue protein sequence, read N- to C-terminus: Autophagy-related protein 31 (139 aa).

The protein belongs to the ATG31 family. In terms of assembly, forms a stable complex with ATG17 and ATG29. Interacts directly with ATG29. The ATG17-ATG29-ATG31 complex interacts with the ATG1-ATG13 complex. Note=The interaction with the ATG1-ATG13 complex is induced by starvation.

It localises to the preautophagosomal structure. Plays a role in starvation-induced autophagy. Involved in mitophagy. Functions with ATG17 and ATG29 at the preautophagosomal structure (PAS) in order to form normal autophagosomes under starvation conditions. The chain is Autophagy-related protein 31 from Kluyveromyces marxianus (strain DMKU3-1042 / BCC 29191 / NBRC 104275) (Yeast).